Reading from the N-terminus, the 111-residue chain is MNNLAEKKCIPCSLGTPPLSSDEIKRYISQLHEEWKVINDHHLEREFKFKNFKEALSYTNVIGQLAEKEGHHPDMLLSWGKVKITLFTHKIDGLSESDFVFAAKVDKQQSE.

This sequence belongs to the pterin-4-alpha-carbinolamine dehydratase family.

It catalyses the reaction (4aS,6R)-4a-hydroxy-L-erythro-5,6,7,8-tetrahydrobiopterin = (6R)-L-erythro-6,7-dihydrobiopterin + H2O. The protein is Putative pterin-4-alpha-carbinolamine dehydratase of Alkaliphilus metalliredigens (strain QYMF).